The sequence spans 381 residues: Succinyl-diaminopimelate desuccinylase (381 aa).

Histidine 72 is a Zn(2+) binding site. Residue aspartate 74 is part of the active site. Residue aspartate 105 participates in Zn(2+) binding. Glutamate 139 serves as the catalytic Proton acceptor. 3 residues coordinate Zn(2+): glutamate 140, glutamate 168, and histidine 354.

It belongs to the peptidase M20A family. DapE subfamily. As to quaternary structure, homodimer. Zn(2+) serves as cofactor. Requires Co(2+) as cofactor.

The enzyme catalyses N-succinyl-(2S,6S)-2,6-diaminopimelate + H2O = (2S,6S)-2,6-diaminopimelate + succinate. It functions in the pathway amino-acid biosynthesis; L-lysine biosynthesis via DAP pathway; LL-2,6-diaminopimelate from (S)-tetrahydrodipicolinate (succinylase route): step 3/3. Its function is as follows. Catalyzes the hydrolysis of N-succinyl-L,L-diaminopimelic acid (SDAP), forming succinate and LL-2,6-diaminopimelate (DAP), an intermediate involved in the bacterial biosynthesis of lysine and meso-diaminopimelic acid, an essential component of bacterial cell walls. This chain is Succinyl-diaminopimelate desuccinylase, found in Shewanella sp. (strain MR-4).